Reading from the N-terminus, the 275-residue chain is Phosphite transport system permease protein PtxC (275 aa).

5 consecutive transmembrane segments (helical) span residues 30–50 (LGQV…VGLL), 88–108 (LAMS…VAFV), 136–156 (LIMG…GVLA), 221–241 (ASTV…MGSL), and 249–269 (VAAI…FSGV). The 184-residue stretch at 84 to 267 (LIDTLAMSIA…AMVTLVDAFS (184 aa)) folds into the ABC transmembrane type-1 domain.

It belongs to the binding-protein-dependent transport system permease family.

It is found in the cell inner membrane. Probably forms part of a binding-protein-dependent phosphite transporter. Probably responsible for the translocation of the substrate across the membrane. The chain is Phosphite transport system permease protein PtxC (ptxC) from Stutzerimonas stutzeri (Pseudomonas stutzeri).